A 177-amino-acid chain; its full sequence is Probable chemoreceptor glutamine deamidase CheD (177 aa).

Belongs to the CheD family.

The catalysed reaction is L-glutaminyl-[protein] + H2O = L-glutamyl-[protein] + NH4(+). Probably deamidates glutamine residues to glutamate on methyl-accepting chemotaxis receptors (MCPs), playing an important role in chemotaxis. The sequence is that of Probable chemoreceptor glutamine deamidase CheD from Pseudomonas syringae pv. syringae (strain B728a).